We begin with the raw amino-acid sequence, 56 residues long: uncharacterized protein (56 aa).

This is an uncharacterized protein from Borreliella burgdorferi (strain ATCC 35210 / DSM 4680 / CIP 102532 / B31) (Borrelia burgdorferi).